Consider the following 345-residue polypeptide: Phosphoribosylformylglycinamidine cyclo-ligase (345 aa).

This sequence belongs to the AIR synthase family.

Its subcellular location is the cytoplasm. It catalyses the reaction 2-formamido-N(1)-(5-O-phospho-beta-D-ribosyl)acetamidine + ATP = 5-amino-1-(5-phospho-beta-D-ribosyl)imidazole + ADP + phosphate + H(+). The protein operates within purine metabolism; IMP biosynthesis via de novo pathway; 5-amino-1-(5-phospho-D-ribosyl)imidazole from N(2)-formyl-N(1)-(5-phospho-D-ribosyl)glycinamide: step 2/2. This Synechococcus sp. (strain CC9902) protein is Phosphoribosylformylglycinamidine cyclo-ligase.